The chain runs to 526 residues: Ribonuclease Y (526 aa).

The helical transmembrane segment at 10 to 30 (ITFILLIVVGALGGALVGYFI) threads the bilayer. The region spanning 216–279 (TVTVVEIPNE…EVAKRALTIL (64 aa)) is the KH domain. An HD domain is found at 342–435 (VLKHSIEVAF…VAAADALSAA (94 aa)).

Belongs to the RNase Y family.

It localises to the cell membrane. Endoribonuclease that initiates mRNA decay. The protein is Ribonuclease Y of Acholeplasma laidlawii (strain PG-8A).